Here is a 186-residue protein sequence, read N- to C-terminus: Putative adenylate kinase (186 aa).

ATP contacts are provided by Gly-10, Gly-12, Lys-13, Thr-14, and Ser-15. Positions 30-53 (HLNELIKEEHLYTEVDEKRDSVVA) are NMP. The segment at 108-118 (KRGYSEEKVNE) is LID. Arg-109 contacts ATP.

Belongs to the adenylate kinase family. AK6 subfamily. In terms of assembly, interacts with uS11. Not a structural component of 40S pre-ribosomes, but transiently interacts with them by binding to uS11.

It catalyses the reaction AMP + ATP = 2 ADP. The catalysed reaction is ATP + H2O = ADP + phosphate + H(+). Its function is as follows. Broad-specificity nucleoside monophosphate (NMP) kinase that catalyzes the reversible transfer of the terminal phosphate group between nucleoside triphosphates and monophosphates. Also has ATPase activity. Involved in the late maturation steps of the 30S ribosomal particles, specifically 16S rRNA maturation. While NMP activity is not required for ribosome maturation, ATPase activity is. Associates transiently with small ribosomal subunit protein uS11. ATP hydrolysis breaks the interaction with uS11. May temporarily remove uS11 from the ribosome to enable a conformational change of the ribosomal RNA that is needed for the final maturation step of the small ribosomal subunit. This chain is Putative adenylate kinase, found in Methanosarcina acetivorans (strain ATCC 35395 / DSM 2834 / JCM 12185 / C2A).